The sequence spans 510 residues: ATP synthase subunit alpha (510 aa).

An ATP-binding site is contributed by 169 to 176 (GDRQTGKT).

This sequence belongs to the ATPase alpha/beta chains family. As to quaternary structure, F-type ATPases have 2 components, CF(1) - the catalytic core - and CF(0) - the membrane proton channel. CF(1) has five subunits: alpha(3), beta(3), gamma(1), delta(1), epsilon(1). CF(0) has three main subunits: a(1), b(2) and c(9-12). The alpha and beta chains form an alternating ring which encloses part of the gamma chain. CF(1) is attached to CF(0) by a central stalk formed by the gamma and epsilon chains, while a peripheral stalk is formed by the delta and b chains.

Its subcellular location is the cell inner membrane. It catalyses the reaction ATP + H2O + 4 H(+)(in) = ADP + phosphate + 5 H(+)(out). Its function is as follows. Produces ATP from ADP in the presence of a proton gradient across the membrane. The alpha chain is a regulatory subunit. This chain is ATP synthase subunit alpha, found in Afipia carboxidovorans (strain ATCC 49405 / DSM 1227 / KCTC 32145 / OM5) (Oligotropha carboxidovorans).